A 238-amino-acid chain; its full sequence is Small ribosomal subunit protein eS4 (238 aa).

Positions 38 to 109 constitute an S4 RNA-binding domain; sequence IPLALVIRDV…DERSYYALVP (72 aa).

Belongs to the eukaryotic ribosomal protein eS4 family.

This chain is Small ribosomal subunit protein eS4, found in Pyrobaculum neutrophilum (strain DSM 2338 / JCM 9278 / NBRC 100436 / V24Sta) (Thermoproteus neutrophilus).